The primary structure comprises 173 residues: Peptide deformylase (173 aa).

Residues Cys-91 and His-133 each contribute to the Fe cation site. The active site involves Glu-134. A Fe cation-binding site is contributed by His-137.

The protein belongs to the polypeptide deformylase family. It depends on Fe(2+) as a cofactor.

The enzyme catalyses N-terminal N-formyl-L-methionyl-[peptide] + H2O = N-terminal L-methionyl-[peptide] + formate. Functionally, removes the formyl group from the N-terminal Met of newly synthesized proteins. Requires at least a dipeptide for an efficient rate of reaction. N-terminal L-methionine is a prerequisite for activity but the enzyme has broad specificity at other positions. This is Peptide deformylase from Blochmanniella pennsylvanica (strain BPEN).